Here is a 268-residue protein sequence, read N- to C-terminus: 4-hydroxy-tetrahydrodipicolinate reductase (268 aa).

8-13 (GAAGRM) contacts NAD(+). Arg36 serves as a coordination point for NADP(+). NAD(+) is bound by residues 99 to 101 (GTT) and 123 to 126 (AANF). His156 serves as the catalytic Proton donor/acceptor. His157 is a binding site for (S)-2,3,4,5-tetrahydrodipicolinate. The active-site Proton donor is the Lys160. 166–167 (GT) contributes to the (S)-2,3,4,5-tetrahydrodipicolinate binding site.

Belongs to the DapB family.

It is found in the cytoplasm. It catalyses the reaction (S)-2,3,4,5-tetrahydrodipicolinate + NAD(+) + H2O = (2S,4S)-4-hydroxy-2,3,4,5-tetrahydrodipicolinate + NADH + H(+). The catalysed reaction is (S)-2,3,4,5-tetrahydrodipicolinate + NADP(+) + H2O = (2S,4S)-4-hydroxy-2,3,4,5-tetrahydrodipicolinate + NADPH + H(+). It functions in the pathway amino-acid biosynthesis; L-lysine biosynthesis via DAP pathway; (S)-tetrahydrodipicolinate from L-aspartate: step 4/4. Catalyzes the conversion of 4-hydroxy-tetrahydrodipicolinate (HTPA) to tetrahydrodipicolinate. The protein is 4-hydroxy-tetrahydrodipicolinate reductase of Pseudomonas fluorescens (strain SBW25).